We begin with the raw amino-acid sequence, 208 residues long: Small ribosomal subunit protein uS4 (208 aa).

An S4 RNA-binding domain is found at 98–158; that stretch reads RRLDNVVYRL…EKSRKIACIN (61 aa).

Belongs to the universal ribosomal protein uS4 family. Part of the 30S ribosomal subunit. Contacts protein S5. The interaction surface between S4 and S5 is involved in control of translational fidelity.

In terms of biological role, one of the primary rRNA binding proteins, it binds directly to 16S rRNA where it nucleates assembly of the body of the 30S subunit. Functionally, with S5 and S12 plays an important role in translational accuracy. This chain is Small ribosomal subunit protein uS4, found in Geobacter metallireducens (strain ATCC 53774 / DSM 7210 / GS-15).